Reading from the N-terminus, the 656-residue chain is Ankyrin repeat and SAM domain-containing protein 3 (656 aa).

The interaction with NEK7 stretch occupies residues 1–422 (MSELSDEASE…AESSPQTQRA (422 aa)). A phosphoserine mark is found at Ser-2 and Ser-5. ANK repeat units lie at residues 34-64 (DVPL…DLNK), 68-97 (GGWT…SVNV), 101-130 (EGQT…ELEM), 134-163 (QGWT…NANV), 168-197 (CGFT…KVDA), and 201-220 (SGAT…IVAL). Position 96 is a 3-hydroxyasparagine (Asn-96). Ser-201, Ser-225, Ser-243, Ser-244, and Ser-245 each carry phosphoserine. Disordered regions lie at residues 235–265 (SPEK…GVSI) and 277–312 (GIGL…EEEG). Thr-319 bears the Phosphothreonine mark. A phosphoserine mark is found at Ser-320, Ser-368, Ser-371, and Ser-375. The interval 346-425 (GPVQSSSSSE…SPQTQRAPYS (80 aa)) is disordered. In terms of domain architecture, SAM spans 425–488 (SGPQDLAALL…TSAIARWHSS (64 aa)). Positions 501 to 526 (ADRLEAEMQELAIQLHKRCEEVEATR) form a coiled coil. Ser-541 carries the post-translational modification Phosphoserine.

Homooligomer. Interacts (via SAM domain) with ANKS6 (via SAM domain). Interacts with BICC1. Interacts with NPHP1. Interacts with NEK8. Interacts with HIF1AN. Interacts with NEK7; this interaction alters the subcellular distribution of NEK7 by preventing its nuclear translocation. Hydroxylated at Asn-96, most probably by HIF1AN. Post-translationally, phosphorylations at Ser-5, Ser-225, Thr-319, Ser-320, Ser-368 and Ser-371 occur in a NEK7-dependent manner. In terms of processing, polyubiquitinated.

The protein resides in the cell projection. Its subcellular location is the cilium. The protein localises to the cytoplasm. Functionally, may be involved in vasopressin signaling in the kidney. The polypeptide is Ankyrin repeat and SAM domain-containing protein 3 (ANKS3) (Homo sapiens (Human)).